A 162-amino-acid polypeptide reads, in one-letter code: NADH-quinone oxidoreductase subunit I (162 aa).

2 consecutive 4Fe-4S ferredoxin-type domains span residues 54–83 and 93–122; these read RRYE…IESE and TRYD…ETQI. [4Fe-4S] cluster-binding residues include cysteine 63, cysteine 66, cysteine 69, cysteine 73, cysteine 102, cysteine 105, cysteine 108, and cysteine 112.

Belongs to the complex I 23 kDa subunit family. In terms of assembly, NDH-1 is composed of 14 different subunits. Subunits NuoA, H, J, K, L, M, N constitute the membrane sector of the complex. [4Fe-4S] cluster serves as cofactor.

It localises to the cell inner membrane. It catalyses the reaction a quinone + NADH + 5 H(+)(in) = a quinol + NAD(+) + 4 H(+)(out). Its function is as follows. NDH-1 shuttles electrons from NADH, via FMN and iron-sulfur (Fe-S) centers, to quinones in the respiratory chain. The immediate electron acceptor for the enzyme in this species is believed to be ubiquinone. Couples the redox reaction to proton translocation (for every two electrons transferred, four hydrogen ions are translocated across the cytoplasmic membrane), and thus conserves the redox energy in a proton gradient. The polypeptide is NADH-quinone oxidoreductase subunit I (Burkholderia ambifaria (strain MC40-6)).